We begin with the raw amino-acid sequence, 1758 residues long: RanBP2-like and GRIP domain-containing protein 3 (1758 aa).

Phosphoserine is present on serine 21. The TPR 1 repeat unit spans residues proline 60–glutamine 93. Positions arginine 176–arginine 229 form a coiled coil. The TPR 2 repeat unit spans residues glutamine 584 to isoleucine 617. The interval glycine 761 to alanine 805 is disordered. The span at serine 779–proline 798 shows a compositional bias: low complexity. The stretch at alanine 805–alanine 837 forms a coiled coil. Residues histidine 1037–aspartate 1173 form the RanBD1 1 domain. Disordered stretches follow at residues valine 1216–glutamate 1248, alanine 1307–phenylalanine 1335, and asparagine 1581–serine 1622. Positions isoleucine 1236–proline 1245 are enriched in polar residues. The segment covering threonine 1318–arginine 1330 has biased composition (acidic residues). Residues tyrosine 1334–lysine 1470 enclose the RanBD1 2 domain. Polar residues predominate over residues asparagine 1581 to glutamate 1594. Over residues serine 1595 to valine 1618 the composition is skewed to basic and acidic residues. The 51-residue stretch at glutamine 1703–valine 1753 folds into the GRIP domain.

The chain is RanBP2-like and GRIP domain-containing protein 3 (RGPD3) from Homo sapiens (Human).